The chain runs to 130 residues: Small ribosomal subunit protein uS9 (130 aa).

It belongs to the universal ribosomal protein uS9 family.

In Pseudomonas entomophila (strain L48), this protein is Small ribosomal subunit protein uS9.